Consider the following 367-residue polypeptide: Ribosomal lysine N-methyltransferase 5 (367 aa).

The tract at residues 55–74 (EGGRKKKRVRRRNKASSVEE) is disordered. Over residues 58–68 (RKKKRVRRRNK) the composition is skewed to basic residues. S-adenosyl-L-methionine-binding positions include Trp-110, 170-172 (GAG), Asp-192, Trp-256, and Met-288.

It belongs to the class I-like SAM-binding methyltransferase superfamily. RKM5 family.

Functionally, S-adenosyl-L-methionine-dependent protein-lysine N-methyltransferase that monomethylates 60S ribosomal protein L1 (RPL1A and RPL1B) at 'Lys-46'. The polypeptide is Ribosomal lysine N-methyltransferase 5 (RKM5) (Saccharomyces cerevisiae (strain AWRI796) (Baker's yeast)).